Here is a 442-residue protein sequence, read N- to C-terminus: Ribosome biogenesis protein NOP53 (442 aa).

Residues 242-264 (KPSSNTNLKKIEDKTPRQAQKSV) are disordered.

Belongs to the NOP53 family.

It is found in the nucleus. It localises to the nucleolus. Its subcellular location is the nucleoplasm. Functionally, may play a role in ribosome biogenesis. In Arabidopsis thaliana (Mouse-ear cress), this protein is Ribosome biogenesis protein NOP53.